We begin with the raw amino-acid sequence, 715 residues long: ABC transporter F family member 3 (715 aa).

Thr2 is subject to N-acetylthreonine. Residues 96-118 (VRMNDGMDDGPVKKKKPEPVDGP) are disordered. 2 ABC transporter domains span residues 175–436 (IHMD…KNQQ) and 504–713 (ISFS…LLQS). ATP contacts are provided by residues 207-214 (GRNGTGKT) and 537-544 (GPNGIGKS).

This sequence belongs to the ABC transporter superfamily. ABCF family. EF3 (TC 3.A.1.121) subfamily.

The sequence is that of ABC transporter F family member 3 (ABCF3) from Arabidopsis thaliana (Mouse-ear cress).